Here is a 185-residue protein sequence, read N- to C-terminus: Acireductone dioxygenase (185 aa).

Positions 97, 99, 103, and 141 each coordinate Fe(2+). 4 residues coordinate Ni(2+): histidine 97, histidine 99, glutamate 103, and histidine 141.

Belongs to the acireductone dioxygenase (ARD) family. As to quaternary structure, monomer. Fe(2+) is required as a cofactor. Ni(2+) serves as cofactor.

The catalysed reaction is 1,2-dihydroxy-5-(methylsulfanyl)pent-1-en-3-one + O2 = 3-(methylsulfanyl)propanoate + CO + formate + 2 H(+). It catalyses the reaction 1,2-dihydroxy-5-(methylsulfanyl)pent-1-en-3-one + O2 = 4-methylsulfanyl-2-oxobutanoate + formate + 2 H(+). Its pathway is amino-acid biosynthesis; L-methionine biosynthesis via salvage pathway; L-methionine from S-methyl-5-thio-alpha-D-ribose 1-phosphate: step 5/6. Catalyzes 2 different reactions between oxygen and the acireductone 1,2-dihydroxy-3-keto-5-methylthiopentene (DHK-MTPene) depending upon the metal bound in the active site. Fe-containing acireductone dioxygenase (Fe-ARD) produces formate and 2-keto-4-methylthiobutyrate (KMTB), the alpha-ketoacid precursor of methionine in the methionine recycle pathway. Ni-containing acireductone dioxygenase (Ni-ARD) produces methylthiopropionate, carbon monoxide and formate, and does not lie on the methionine recycle pathway. The sequence is that of Acireductone dioxygenase from Stenotrophomonas maltophilia (strain K279a).